A 92-amino-acid chain; its full sequence is Small ribosomal subunit protein uS19 (92 aa).

It belongs to the universal ribosomal protein uS19 family.

Its function is as follows. Protein S19 forms a complex with S13 that binds strongly to the 16S ribosomal RNA. The polypeptide is Small ribosomal subunit protein uS19 (Streptococcus pyogenes serotype M49 (strain NZ131)).